The primary structure comprises 499 residues: Serine/threonine-protein kinase SSN3 (499 aa).

Residues Met-1 to Ala-21 are disordered. One can recognise a Protein kinase domain in the interval Tyr-61 to Phe-442. Residues Ile-67–Val-75 and Lys-91 each bind ATP. Catalysis depends on Asp-193, which acts as the Proton acceptor. Disordered regions lie at residues Ser-332 to Ala-376 and Arg-463 to Glu-499. Positions Ser-365–Ala-376 are enriched in low complexity. Positions Arg-463–Ile-472 are enriched in basic and acidic residues.

It belongs to the protein kinase superfamily. CMGC Ser/Thr protein kinase family. CDC2/CDKX subfamily. Component of the SRB8-11 complex, a regulatory module of the Mediator complex. Mg(2+) is required as a cofactor.

It localises to the nucleus. The enzyme catalyses L-seryl-[protein] + ATP = O-phospho-L-seryl-[protein] + ADP + H(+). The catalysed reaction is L-threonyl-[protein] + ATP = O-phospho-L-threonyl-[protein] + ADP + H(+). It catalyses the reaction [DNA-directed RNA polymerase] + ATP = phospho-[DNA-directed RNA polymerase] + ADP + H(+). Its function is as follows. Component of the SRB8-11 complex. The SRB8-11 complex is a regulatory module of the Mediator complex which is itself involved in regulation of basal and activated RNA polymerase II-dependent transcription. The SRB8-11 complex may be involved in the transcriptional repression of a subset of genes regulated by Mediator. It may inhibit the association of the Mediator complex with RNA polymerase II to form the holoenzyme complex. The SRB8-11 complex phosphorylates the C-terminal domain (CTD) of the largest subunit of RNA polymerase II. This chain is Serine/threonine-protein kinase SSN3 (SSN3), found in Pyricularia oryzae (strain 70-15 / ATCC MYA-4617 / FGSC 8958) (Rice blast fungus).